A 408-amino-acid polypeptide reads, in one-letter code: E3 ubiquitin-protein ligase IE2 (408 aa).

Polar residues predominate over residues 1 to 10; it reads MSRQINAATP. 2 disordered regions span residues 1–67 and 176–199; these read MSRQ…ENVQ and QSPDLFASPQSPQPQQQQQQQSEP. Residues 13–25 show a composition bias toward basic residues; it reads SRRHRLSLSRRRI. The span at 30-47 shows a compositional bias: low complexity; that stretch reads SPEAQPSSSSRSQPSSSS. Repeat copies occupy residues 34–41, 42–49, 51–54, and 55–58. A 2 X 8 AA tandem repeats of Q-P-S-S-S-S-R-S region spans residues 34 to 49; it reads QPSSSSRSQPSSSSRS. The interval 51–58 is 2 X 4 AA tandem repeats of R-R-Q-E; it reads RRQERRQE. Positions 183-197 are enriched in low complexity; that stretch reads SPQSPQPQQQQQQQS. The RING-type zinc-finger motif lies at 207–255; it reads CNICFTTFKDTKNVNSSFVTSIHCNHAVCFKCYVKIIMDNSVYKCFCSA.

The protein belongs to the alphabaculovirus IE2 protein family. Homooligomer. In terms of processing, auto-ubiquitinated.

It is found in the host nucleus. It catalyses the reaction S-ubiquitinyl-[E2 ubiquitin-conjugating enzyme]-L-cysteine + [acceptor protein]-L-lysine = [E2 ubiquitin-conjugating enzyme]-L-cysteine + N(6)-ubiquitinyl-[acceptor protein]-L-lysine.. RING-finger E3 ubiquitin ligase that plays an important regulatory role during the initial stages of infection. Migrates to specific nuclear foci early in infection supposely to prepare the sites for viral transcription and replication by targeting and ubiquitinating host proteins. Acts as a transcriptional activator and activates a number of viral promoters including itself, IE1 and the promoter of 39K gene. This Lepidoptera (butterflies and moths) protein is E3 ubiquitin-protein ligase IE2 (IE2).